The following is a 307-amino-acid chain: Probable RuBisCO transcriptional regulator (307 aa).

Positions 5–62 (FTLQQLRIFKAIASEKSFTQAAEILFVSQPSLSKQIKTLENRLGILLLNRTGNKILLT) constitute an HTH lysR-type domain. The H-T-H motif DNA-binding region spans 22 to 41 (FTQAAEILFVSQPSLSKQIK).

It belongs to the LysR transcriptional regulatory family.

The protein localises to the plastid. The protein resides in the chloroplast. In terms of biological role, trans-acting transcriptional regulator of RuBisCO genes (rbcL and rbcS) expression. The sequence is that of Probable RuBisCO transcriptional regulator (rbcR-A) from Thalassiosira pseudonana (Marine diatom).